Here is a 416-residue protein sequence, read N- to C-terminus: Notoamide biosynthesis cluster protein N' (416 aa).

Positions 1–16 (MRAALLTLAFTALAAA) are cleaved as a signal peptide. 2 N-linked (GlcNAc...) asparagine glycosylation sites follow: asparagine 119 and asparagine 262.

In terms of biological role, part of the gene cluster that mediates the biosynthesis of notoamide, a fungal indole alkaloid that belongs to a family of natural products containing a characteristic bicyclo[2.2.2]diazaoctane core. The first step of notoamide biosynthesis involves coupling of L-proline and L-tryptophan by the bimodular NRPS notE', to produce cyclo-L-tryptophan-L-proline called brevianamide F. The reverse prenyltransferase notF' then acts as a deoxybrevianamide E synthase and converts brevianamide F to deoxybrevianamide E via reverse prenylation at C-2 of the indole ring leading to the bicyclo[2.2.2]diazaoctane core. Deoxybrevianamide E is further hydroxylated at C-6 of the indole ring, likely catalyzed by the cytochrome P450 monooxygenase notG', to yield 6-hydroxy-deoxybrevianamide E. 6-hydroxy-deoxybrevianamide E is a specific substrate of the prenyltransferase notC' for normal prenylation at C-7 to produce 6-hydroxy-7-prenyl-deoxybrevianamide, also called notoamide S. As the proposed pivotal branching point in notoamide biosynthesis, notoamide S can be diverted to notoamide E through an oxidative pyran ring closure putatively catalyzed by either notH' cytochrome P450 monooxygenase or the notD' FAD-linked oxidoreductase. This step would be followed by an indole 2,3-epoxidation-initiated pinacol-like rearrangement catalyzed by the notB' FAD-dependent monooxygenase leading to the formation of notoamide C and notoamide D. On the other hand notoamide S is converted to notoamide T by notH' (or notD'), a bifunctional oxidase that also functions as the intramolecular Diels-Alderase responsible for generation of (-)-notoamide T. To generate antipodal (+)-notoaminide T, notH (or notD) in Aspergillus strain MF297-2 is expected to catalyze a Diels-Alder reaction leading to the opposite stereochemistry. The remaining oxidoreductase notD' (or notH') likely catalyzes the oxidative pyran ring formation to yield (-)-stephacidin A. The FAD-dependent monooxygenase notI' is highly similar to notB' and is predicted to catalyze a similar conversion from (-)-stephacidin A to (+)-notoamide B via the 2,3-epoxidation of (-)-stephacidin A followed by a pinacol-type rearrangement. Finally, it remains unclear which enzyme could be responsible for the final hydroxylation steps leading to notoamide A and sclerotiamide. The function of notN' in the notoamide biosynthesis has not been determined yet. The polypeptide is Notoamide biosynthesis cluster protein N' (Aspergillus versicolor).